The following is a 503-amino-acid chain: Chromodomain Y-like protein 2 (503 aa).

The 61-residue stretch at 7-67 (YEVERIVDKR…LHLSKDKRVK (61 aa)) folds into the Chromo domain. The segment at 66–177 (VKSGKQAGAS…GNGSHQPDLE (112 aa)) is disordered. Residues 88-98 (RLSHRPLEPGK) show a composition bias toward basic and acidic residues. Positions 101–120 (PSSHKRKRVNSPLSRPKKGS) are enriched in basic residues. Polar residues predominate over residues 130–140 (KTVSYRTTPSG).

As to quaternary structure, interacts (via chromo domain) with histone H3K9me3.

It localises to the nucleus. This Mus musculus (Mouse) protein is Chromodomain Y-like protein 2 (Cdyl2).